The sequence spans 483 residues: WAS/WASL-interacting protein family member 3 (483 aa).

The span at 1-29 (MPVPPPPPPPLPPPPPPLGAPPPPPPSAP) shows a compositional bias: pro residues. The interval 1 to 414 (MPVPPPPPPP…GGQLRNGSLH (414 aa)) is disordered. 3 short sequence motifs (profilin-binding motif) span residues 3-8 (VPPPPP), 11-16 (LPPPPP), and 20-25 (APPPPP). The WH2 domain occupies 45–62 (GRSALLADIQQGTRLRKV). R46 bears the Asymmetric dimethylarginine mark. Residues 58–61 (RLRK) carry the RLRK motif. 2 stretches are compositionally biased toward polar residues: residues 63 to 78 (TQIN…SSKG) and 87 to 96 (ANTRGASTPP). At S149 the chain carries Phosphoserine. Positions 166-192 (PPRPNVPAPPPPTPPPPPPPLPPPLPS) are enriched in pro residues. Residue S202 is modified to Phosphoserine. Composition is skewed to pro residues over residues 215–239 (VAPP…PLPP) and 256–271 (HLPP…PPCG). Residues 277–288 (AEPASPAQDAQE) show a composition bias toward low complexity. The segment covering 289–298 (PPAPPPPLPP) has biased composition (pro residues). Composition is skewed to low complexity over residues 299–308 (YASCSPRASL) and 331–345 (PSFQ…AQAL). Residue S383 is modified to Phosphoserine. The segment covering 393 to 404 (QQATAWTPTQQP) has biased composition (low complexity). The WASP-binding motif motif lies at 424–448 (TFHSVEDFPPPDEYKPCQKIYPSKI). A disordered region spans residues 461-483 (EAVGQSSDDIKGRNSQLSLKTLR). Over residues 473–483 (RNSQLSLKTLR) the composition is skewed to polar residues.

Belongs to the verprolin family. As to quaternary structure, interacts with WASL, and monomeric and filamentous actin.

Its subcellular location is the cytoplasm. May be a regulator of cytoskeletal organization. May have a role in spermatogenesis. This chain is WAS/WASL-interacting protein family member 3 (WIPF3), found in Homo sapiens (Human).